A 521-amino-acid chain; its full sequence is Maturase K (521 aa).

The protein belongs to the intron maturase 2 family. MatK subfamily.

It localises to the plastid. Functionally, usually encoded in the trnK tRNA gene intron. Probably assists in splicing its own and other chloroplast group II introns. In Cuscuta exaltata (Tall dodder), this protein is Maturase K.